The primary structure comprises 97 residues: YcgL domain-containing protein PSPPH_1548 (97 aa).

In terms of domain architecture, YcgL spans 3 to 87; that stretch reads RICSIYRSPK…AEDDYIEHLP (85 aa).

This is YcgL domain-containing protein PSPPH_1548 from Pseudomonas savastanoi pv. phaseolicola (strain 1448A / Race 6) (Pseudomonas syringae pv. phaseolicola (strain 1448A / Race 6)).